Here is a 165-residue protein sequence, read N- to C-terminus: Pro-MCH (165 aa).

Residues Met1 to Gly21 form the signal peptide. Positions Tyr66–Gln89 are disordered. The residue at position 143 (Ile143) is an Isoleucine amide. The cysteines at positions 153 and 162 are disulfide-linked.

The protein belongs to the MCH family. In terms of processing, pro-MCH is processed differentially in the brain and in peripheral organs producing two neuropeptides; NEI and MCH. A third peptide, NGE, may also be produced. Preferential processing in neurons by prohormone convertase 2 (PC2) generates NEI. MCH is generated in neurons of the lateral hypothalmic area by several prohormone convertases including PC1/3, PC2 and PC5/6. Predominantly expressed in hypothalamus. Also found in heart, intestine, spleen and testis (spermatogonia, early spermatocytes and Sertoli cells). In brain only mature MCH and NEI peptides are present. In peripheral tissues a large product, encompassing the NEI and MCH domains of the precursor, is found predominantly.

It localises to the secreted. Its function is as follows. MCH may act as a neurotransmitter or neuromodulator in a broad array of neuronal functions directed toward the regulation of goal-directed behavior, such as food intake, and general arousal. The sequence is that of Pro-MCH (Pmch) from Mus musculus (Mouse).